A 204-amino-acid polypeptide reads, in one-letter code: Urease accessory protein UreG (204 aa).

Position 12–19 (12–19 (GPVGSGKT)) interacts with GTP.

It belongs to the SIMIBI class G3E GTPase family. UreG subfamily. In terms of assembly, homodimer. UreD, UreF and UreG form a complex that acts as a GTP-hydrolysis-dependent molecular chaperone, activating the urease apoprotein by helping to assemble the nickel containing metallocenter of UreC. The UreE protein probably delivers the nickel.

It localises to the cytoplasm. In terms of biological role, facilitates the functional incorporation of the urease nickel metallocenter. This process requires GTP hydrolysis, probably effectuated by UreG. The sequence is that of Urease accessory protein UreG from Hahella chejuensis (strain KCTC 2396).